Here is a 210-residue protein sequence, read N- to C-terminus: Large ribosomal subunit protein uL3 (210 aa).

Q151 bears the N5-methylglutamine mark.

The protein belongs to the universal ribosomal protein uL3 family. Part of the 50S ribosomal subunit. Forms a cluster with proteins L14 and L19. Methylated by PrmB.

One of the primary rRNA binding proteins, it binds directly near the 3'-end of the 23S rRNA, where it nucleates assembly of the 50S subunit. The protein is Large ribosomal subunit protein uL3 of Aeromonas hydrophila subsp. hydrophila (strain ATCC 7966 / DSM 30187 / BCRC 13018 / CCUG 14551 / JCM 1027 / KCTC 2358 / NCIMB 9240 / NCTC 8049).